The primary structure comprises 504 residues: Glutamate--tRNA ligase (504 aa).

The 'HIGH' region motif lies at 25-35 (PSPTGNPHVGL). Residues cysteine 122, cysteine 124, cysteine 149, and glutamate 151 each coordinate Zn(2+). Residues 270-274 (KLSKR) carry the 'KMSKS' region motif. Lysine 273 provides a ligand contact to ATP.

Belongs to the class-I aminoacyl-tRNA synthetase family. Glutamate--tRNA ligase type 1 subfamily. In terms of assembly, monomer. It depends on Zn(2+) as a cofactor.

It localises to the cytoplasm. It carries out the reaction tRNA(Glu) + L-glutamate + ATP = L-glutamyl-tRNA(Glu) + AMP + diphosphate. Its function is as follows. Catalyzes the attachment of glutamate to tRNA(Glu) in a two-step reaction: glutamate is first activated by ATP to form Glu-AMP and then transferred to the acceptor end of tRNA(Glu). This is Glutamate--tRNA ligase from Streptomyces avermitilis (strain ATCC 31267 / DSM 46492 / JCM 5070 / NBRC 14893 / NCIMB 12804 / NRRL 8165 / MA-4680).